A 228-amino-acid polypeptide reads, in one-letter code: Histone H1-III (228 aa).

The segment covering 1 to 18 has biased composition (low complexity); the sequence is MSDPAPEVASAVPVASPA. Disordered regions lie at residues 1-44 and 98-228; these read MSDP…PPVS and LQTK…AKKA. Residues 39–113 enclose the H15 domain; the sequence is THPPVSEMVV…GASGSFKLPA (75 aa). Positions 115-133 are enriched in basic and acidic residues; the sequence is AKKEKVAKTPKKAAGEKKP. Composition is skewed to basic residues over residues 148-170 and 178-209; these read SIAK…KSTK and AAKK…KVAA. Basic and acidic residues predominate over residues 211 to 221; sequence KPAEKKPEAAK.

This sequence belongs to the histone H1/H5 family.

It localises to the nucleus. The protein resides in the chromosome. Its function is as follows. Histones H1 are necessary for the condensation of nucleosome chains into higher-order structures. The protein is Histone H1-III of Glyptotendipes barbipes (Midge).